The sequence spans 167 residues: Ribonuclease H (167 aa).

The 143-residue stretch at 1-143 (MYKQIEIFTD…CDQLARKAAK (143 aa)) folds into the RNase H type-1 domain. Positions 10, 48, 70, and 135 each coordinate Mg(2+).

The protein belongs to the RNase H family. Monomer. Mg(2+) is required as a cofactor.

Its subcellular location is the cytoplasm. It carries out the reaction Endonucleolytic cleavage to 5'-phosphomonoester.. Functionally, endonuclease that specifically degrades the RNA of RNA-DNA hybrids. In Blochmanniella floridana, this protein is Ribonuclease H.